A 147-amino-acid chain; its full sequence is Large ribosomal subunit protein uL13 (147 aa).

The protein belongs to the universal ribosomal protein uL13 family. In terms of assembly, part of the 50S ribosomal subunit.

Its function is as follows. This protein is one of the early assembly proteins of the 50S ribosomal subunit, although it is not seen to bind rRNA by itself. It is important during the early stages of 50S assembly. The protein is Large ribosomal subunit protein uL13 of Kocuria rhizophila (strain ATCC 9341 / DSM 348 / NBRC 103217 / DC2201).